Here is a 482-residue protein sequence, read N- to C-terminus: Lipoamide acyltransferase component of branched-chain alpha-keto acid dehydrogenase complex, mitochondrial (482 aa).

The transit peptide at 1–61 (MAAVRMLRTW…HFLKTTAALR (61 aa)) directs the protein to the mitochondrion. Positions 64-139 (VVQFKLSDIG…YVGKPLVDIE (76 aa)) constitute a Lipoyl-binding domain. Lysine 105 carries the post-translational modification N6-lipoyllysine. Lysine 133 carries the post-translational modification N6-succinyllysine. The tract at residues 145-160 (DSEEDVVETPAVSHDE) is critical for association with PPM1K. The interval 147–168 (EEDVVETPAVSHDEHTHQEIKG) is disordered. Residues 157–168 (SHDEHTHQEIKG) show a composition bias toward basic and acidic residues. In terms of domain architecture, Peripheral subunit-binding (PSBD) spans 172 to 209 (LATPAVRRLAMENNIKLSEVVGSGKDGRILKEDILNYL). Lysine 196 is subject to N6-acetyllysine; alternate. Lysine 196 is subject to N6-succinyllysine; alternate. Lysine 202 carries the post-translational modification N6-acetyllysine. Serine 220 bears the Phosphoserine mark. N6-acetyllysine is present on residues lysine 243 and lysine 250. Lysine 261 carries the post-translational modification N6-succinyllysine. An N6-acetyllysine; alternate modification is found at lysine 289. The residue at position 289 (lysine 289) is an N6-succinyllysine; alternate. Residue arginine 291 coordinates CoA. N6-acetyllysine is present on residues lysine 295 and lysine 304. 8 residues coordinate CoA: serine 306, aspartate 349, glutamine 378, serine 399, asparagine 400, serine 403, glycine 424, and isoleucine 426. Lysine 435 carries the post-translational modification N6-acetyllysine. An N6-acetyllysine; alternate modification is found at lysine 440. Lysine 440 is modified (N6-succinyllysine; alternate). Active-site residues include histidine 452 and aspartate 456.

This sequence belongs to the 2-oxoacid dehydrogenase family. Forms a 24-polypeptide structural core with octahedral symmetry that represents the E2 component of the branched-chain alpha-ketoacid dehydrogenase (BCKDH) complex. The BCKDH complex is composed of three major building blocks E1, E2 and E3. It is organized around E2, a 24-meric cubic core composed of DBT, to which are associated 6 to 12 copies of E1, and approximately 6 copies of the dehydrogenase E3, a DLD dimer. Interacts with PPM1K with a 24:1 stoichiometry; the N-terminal region (residues 49-61) of PPM1K and C-terminal linker of the lipoyl domain of DBT/E2 (residues 145-160) are critical for this interaction whereas the lipoyl prosthetic group is dispensable. This interaction requires colocalization in mitochondria. PPM1K competes with BCKDK for binding to DBT; this interaction is modulated by branched-chain alpha-keto acids (BCKAs). At steady state, BCKDH holoenzyme preferentially binds BCKDK and BCKDHA is phosphorylated. In response to high levels of BCKAs, BCKDK is replaced by PPM1K leading to BCKDHA dephosphorylation. (R)-lipoate serves as cofactor.

It localises to the mitochondrion matrix. The enzyme catalyses N(6)-[(R)-dihydrolipoyl]-L-lysyl-[protein] + 2-methylpropanoyl-CoA = N(6)-[(R)-S(8)-2-methylpropanoyldihydrolipoyl]-L-lysyl-[protein] + CoA. In terms of biological role, the branched-chain alpha-keto dehydrogenase complex catalyzes the overall conversion of alpha-keto acids to acyl-CoA and CO(2). It contains multiple copies of three enzymatic components: branched-chain alpha-keto acid decarboxylase (E1), lipoamide acyltransferase (E2) and lipoamide dehydrogenase (E3). Within this complex, the catalytic function of this enzyme is to accept, and to transfer to coenzyme A, acyl groups that are generated by the branched-chain alpha-keto acid decarboxylase component. The protein is Lipoamide acyltransferase component of branched-chain alpha-keto acid dehydrogenase complex, mitochondrial of Homo sapiens (Human).